The sequence spans 137 residues: Large ribosomal subunit protein uL16 (137 aa).

This sequence belongs to the universal ribosomal protein uL16 family. Part of the 50S ribosomal subunit.

Functionally, binds 23S rRNA and is also seen to make contacts with the A and possibly P site tRNAs. This Lawsonia intracellularis (strain PHE/MN1-00) protein is Large ribosomal subunit protein uL16.